We begin with the raw amino-acid sequence, 168 residues long: tRNA-splicing endonuclease (168 aa).

Active-site residues include Tyr-107, His-114, and Lys-145.

This sequence belongs to the tRNA-intron endonuclease family. Archaeal short subfamily. In terms of assembly, homotetramer; although the tetramer contains four active sites, only two participate in the cleavage. Therefore, it should be considered as a dimer of dimers.

It carries out the reaction pretRNA = a 3'-half-tRNA molecule with a 5'-OH end + a 5'-half-tRNA molecule with a 2',3'-cyclic phosphate end + an intron with a 2',3'-cyclic phosphate and a 5'-hydroxyl terminus.. In terms of biological role, endonuclease that removes tRNA introns. Cleaves pre-tRNA at the 5'- and 3'-splice sites to release the intron. The products are an intron and two tRNA half-molecules bearing 2',3' cyclic phosphate and 5'-OH termini. Recognizes a pseudosymmetric substrate in which 2 bulged loops of 3 bases are separated by a stem of 4 bp. The polypeptide is tRNA-splicing endonuclease (Thermococcus gammatolerans (strain DSM 15229 / JCM 11827 / EJ3)).